Consider the following 205-residue polypeptide: FMN-dependent NADH:quinone oxidoreductase (205 aa).

FMN is bound by residues serine 10 and 16–18 (SVS).

Belongs to the azoreductase type 1 family. As to quaternary structure, homodimer. Requires FMN as cofactor.

It carries out the reaction 2 a quinone + NADH + H(+) = 2 a 1,4-benzosemiquinone + NAD(+). The catalysed reaction is N,N-dimethyl-1,4-phenylenediamine + anthranilate + 2 NAD(+) = 2-(4-dimethylaminophenyl)diazenylbenzoate + 2 NADH + 2 H(+). In terms of biological role, quinone reductase that provides resistance to thiol-specific stress caused by electrophilic quinones. Also exhibits azoreductase activity. Catalyzes the reductive cleavage of the azo bond in aromatic azo compounds to the corresponding amines. The protein is FMN-dependent NADH:quinone oxidoreductase of Agrobacterium fabrum (strain C58 / ATCC 33970) (Agrobacterium tumefaciens (strain C58)).